Here is a 200-residue protein sequence, read N- to C-terminus: Pyrrolidone-carboxylate peptidase (200 aa).

Catalysis depends on residues E78, C141, and H165.

The protein belongs to the peptidase C15 family. In terms of assembly, homotetramer.

The protein resides in the cytoplasm. It carries out the reaction Release of an N-terminal pyroglutamyl group from a polypeptide, the second amino acid generally not being Pro.. Functionally, removes 5-oxoproline from various penultimate amino acid residues except L-proline. The protein is Pyrrolidone-carboxylate peptidase of Thermococcus onnurineus (strain NA1).